A 429-amino-acid chain; its full sequence is Probable M18 family aminopeptidase 2 (429 aa).

3 residues coordinate Zn(2+): His82, His156, and His401.

This sequence belongs to the peptidase M18 family. Zn(2+) is required as a cofactor.

The chain is Probable M18 family aminopeptidase 2 from Pseudomonas putida (strain ATCC 700007 / DSM 6899 / JCM 31910 / BCRC 17059 / LMG 24140 / F1).